The primary structure comprises 550 residues: Transcription factor 7-like 1-D (550 aa).

The tract at residues 1-61 is interaction with CTNNB1-A; the sequence is MPQLNSGXGD…SENHSSDSDS (61 aa). 4 disordered regions span residues 1–77, 182–212, 390–473, and 488–514; these read MPQL…EKPR, GTPPGHLSPEIDPKTGIPRPPHPSELSPYYP, WSAR…SLTT, and ASKSPSSSSLSGHLPSPVGSPLLSRPI. Composition is skewed to basic and acidic residues over residues 17 to 32 and 52 to 77; these read ELIRFKDEGEQEEKSP and SENHSSDSDSEVERRPPPRETFEKPR. Residues 109 to 311 form an interaction with AES and TLE4-A region; it reads LGGITCPMVP…SPNLSMKSNV (203 aa). A DNA-binding region (HMG box) is located at residues 323–391; sequence IKKPLNAFML…LHSQLYPSWS (69 aa). The span at 406–415 shows a compositional bias: basic and acidic residues; that stretch reads KQSPEMENYT. The interaction with CTBP-B stretch occupies residues 407–550; the sequence is QSPEMENYTK…PLPLVARSSD (144 aa). The span at 444–455 shows a compositional bias: low complexity; the sequence is SPATPSAALASP.

This sequence belongs to the TCF/LEF family. In terms of assembly, interacts with csnk1e, ctnnb1-A, ctbp-B, dact1-A and gsk3b. May interact with ase and tle4-A. In terms of processing, phosphorylated. Phosphorylation by csnk1e promotes binding to ctnnb1-A while phosphorylation by gsk3b may reverse this effect.

It localises to the nucleus. Its function is as follows. Participates in the Wnt signaling pathway. Binds to DNA and acts as a repressor in the absence of ctnnb1-A and possibly ctnnb1-B, and as an activator in the presence of these proteins. Required early in development for the establishment of the dorsal body axis in response to maternal Wnt signaling. This chain is Transcription factor 7-like 1-D (tcf7l1-d), found in Xenopus laevis (African clawed frog).